A 120-amino-acid polypeptide reads, in one-letter code: Holo-[acyl-carrier-protein] synthase (120 aa).

2 residues coordinate Mg(2+): Asp-8 and Glu-58.

This sequence belongs to the P-Pant transferase superfamily. AcpS family. Mg(2+) is required as a cofactor.

Its subcellular location is the cytoplasm. It catalyses the reaction apo-[ACP] + CoA = holo-[ACP] + adenosine 3',5'-bisphosphate + H(+). Functionally, transfers the 4'-phosphopantetheine moiety from coenzyme A to a Ser of acyl-carrier-protein. This is Holo-[acyl-carrier-protein] synthase from Streptococcus sanguinis (strain SK36).